The following is a 279-amino-acid chain: MPCRREEEEEAGEEAEGEEEEEDSFLLLQQSVALGSSGEVDRLVAQIGETLQLDAAQHSPASPCGPPGAPLRAPGPLAAAVPADKARSPAVPLLLPPALAETVGPAPPGVLRCALGDRGRVRGRAAPYCVAELATGPSALSPLPPQADLDGPPGAGKQGIPQPLSGPCRRGWLRGAAASRRLQQRRGSQPETRTGDDDPHRLLQQLVLSGNLIKEAVRRLHSRRLQLRAKLPQRPLLGPLSAPVHEPPSPRSPRAACSDPGASGRAQLRTGDGVLVPGS.

Disordered regions lie at residues 1–24 and 56–76; these read MPCR…EEDS and AQHS…APGP. Positions 7–24 are enriched in acidic residues; it reads EEEEAGEEAEGEEEEEDS. At S88 the chain carries Phosphoserine. Disordered regions lie at residues 136–200 and 228–279; these read GPSA…DDPH and RAKL…VPGS. The tract at residues 198–220 is involved in GSK-3 binding; that stretch reads DPHRLLQQLVLSGNLIKEAVRRL. A phosphoserine mark is found at S249 and S252.

It belongs to the GSK-3-binding protein family. Binds DVL1. Binds GSK-3 and prevent GSK-3-dependent phosphorylation. In terms of processing, phosphorylated.

It localises to the cytoplasm. In terms of biological role, positively regulates the Wnt signaling pathway by stabilizing beta-catenin through the association with GSK-3. May play a role in tumor progression and collaborate with PIM1 and MYC in lymphomagenesis. This Homo sapiens (Human) protein is Proto-oncogene FRAT1 (FRAT1).